A 113-amino-acid polypeptide reads, in one-letter code: Hydrogenase maturation factor HypA (113 aa).

Residue H2 coordinates Ni(2+). Zn(2+) contacts are provided by C73, C76, C89, and C92.

It belongs to the HypA/HybF family.

Its function is as follows. Involved in the maturation of [NiFe] hydrogenases. Required for nickel insertion into the metal center of the hydrogenase. The chain is Hydrogenase maturation factor HypA from Albidiferax ferrireducens (strain ATCC BAA-621 / DSM 15236 / T118) (Rhodoferax ferrireducens).